The sequence spans 555 residues: Serine/threonine-protein kinase AGC1-7 (555 aa).

A disordered region spans residues 1 to 126 (MLTKPGKKLD…PSKPHTGGDI (126 aa)). Basic and acidic residues-rich tracts occupy residues 7–16 (KKLDSSESTH) and 35–54 (PRKEMQQKPLFDPKKMDNLI). Residues 84 to 118 (SQSNLNTKPNNNNSNNNSNMSSRSNSIESTSSNPS) are compositionally biased toward low complexity. Positions 146–480 (FRLLKRLGYG…ATEIKQHPFF (335 aa)) constitute a Protein kinase domain. ATP is bound by residues 152–160 (LGYGDIGSV) and lysine 175. The Proton acceptor role is filled by aspartate 271. Residues 481 to 555 (EGVNWALIRS…DPDYIDFEYF (75 aa)) form the AGC-kinase C-terminal domain. A disordered region spans residues 514–547 (AAVDGGGKKNNNGAGGGCSTGGGDNKPNGDCNDP). Residues 526–537 (GAGGGCSTGGGD) show a composition bias toward gly residues.

Belongs to the protein kinase superfamily. AGC Ser/Thr protein kinase family. In terms of assembly, interacts with PDPK1/PDK1. Autophosphorylated and phosphorylated by PDPK1/PDK1. As to expression, specifically expressed in pollen grains.

It is found in the cytoplasm. It catalyses the reaction L-seryl-[protein] + ATP = O-phospho-L-seryl-[protein] + ADP + H(+). The catalysed reaction is L-threonyl-[protein] + ATP = O-phospho-L-threonyl-[protein] + ADP + H(+). Its activity is regulated as follows. Activated by PDPK1/PDK1. Functions redudantly with AGC1-5 as signaling component in the pollen tube. Required for polarized growth of pollen tubes. The chain is Serine/threonine-protein kinase AGC1-7 from Arabidopsis thaliana (Mouse-ear cress).